The following is a 518-amino-acid chain: Hyccin (518 aa).

Disordered stretches follow at residues 385-410 and 466-492; these read GLRR…MDQL and VFSG…EGVA. A compositionally biased stretch (basic and acidic residues) spans 393–403; it reads SSKEKDKEKDA. The span at 466–484 shows a compositional bias: polar residues; sequence VFSGNQPSSRASSPTSNHV.

The protein belongs to the Hyccin family. As to quaternary structure, component of a phosphatidylinositol 4-kinase (PI4K) complex.

It localises to the cytoplasm. The protein localises to the cytosol. It is found in the cell membrane. Its function is as follows. Component of a complex required to localize phosphatidylinositol 4-kinase (PI4K) to the plasma membrane. The complex acts as a regulator of phosphatidylinositol 4-phosphate (PtdIns(4)P) synthesis. The chain is Hyccin (hycc1) from Danio rerio (Zebrafish).